We begin with the raw amino-acid sequence, 220 residues long: Charged multivesicular body protein 2a (220 aa).

The stretch at 12-53 forms a coiled coil; sequence EEMLRQNQRALNRAMRDLDRERQRLEQQEKKIIADIKKMAKQ. The disordered stretch occupies residues 184-220; the sequence is ATGGSLSVAAGKKAEPQPTLADADADLEERLNNLRRD. Positions 208 to 218 match the MIT-interacting motif motif; sequence ADLEERLNNLR. The span at 211 to 220 shows a compositional bias: basic and acidic residues; it reads EERLNNLRRD.

The protein belongs to the SNF7 family. Probable core component of the endosomal sorting required for transport complex III (ESCRT-III). ESCRT-III components are thought to multimerize to form a flat lattice on the perimeter membrane of the endosome.

The protein localises to the late endosome membrane. It localises to the cytoplasm. Functionally, probable core component of the endosomal sorting required for transport complex III (ESCRT-III) which is involved in multivesicular bodies (MVBs) formation and sorting of endosomal cargo proteins into MVBs. MVBs contain intraluminal vesicles (ILVs) that are generated by invagination and scission from the limiting membrane of the endosome and mostly are delivered to lysosomes enabling degradation of membrane proteins, such as stimulated growth factor receptors, lysosomal enzymes and lipids. This chain is Charged multivesicular body protein 2a (chmp2a), found in Danio rerio (Zebrafish).